Reading from the N-terminus, the 424-residue chain is tRNA (guanine-N(7)-)-methyltransferase non-catalytic subunit wuho (424 aa).

Residues leucine 42–glycine 92 form a disordered region. Residues threonine 46–glutamine 68 are compositionally biased toward low complexity. WD repeat units lie at residues alanine 96–leucine 137, glycine 184–serine 223, glycine 227–glutamine 265, and alanine 324–serine 364.

Belongs to the WD repeat TRM82 family. As to quaternary structure, forms a heterodimer with the catalytic subunit Mettl1. Interacts with mei-P26 and weakly interacts with bgcn; required for the function or formation of the mei-P26-bgcn-bam-sxl complex. Interacts with nanos; may be involved in mei-P26-dependent derepression of the BMP signaling pathway. Interacts with Myc; the interaction may be mediated by mei-P26 and may be involved in the regulation of ribosome biogenesis. As to expression, in testis, it is present at high level in hub cells, a niche for germline stem cells of testis. Ubiquitously expressed in all testicular cells throughout spermatogenesis. Ubiquitously expressed in all germline and somatic cells of the ovary.

The protein localises to the nucleus. It is found in the cytoplasm. It functions in the pathway tRNA modification; N(7)-methylguanine-tRNA biosynthesis. In terms of biological role, required for the Mettl1-dependent formation of N(7)-methylguanine at position 46 (m7G46) in tRNA. In the Mettl1-wuho methyltransferase complex, it is required to stabilize and induce conformational changes of the catalytic subunit. Required for binding of nanos mRNA and repression of translation by the mei-P26-bgcn-bam-sxl complex. May cooperate with mei-P26 and nanos to derepress the BMP signaling pathway. May cooperate with mei-P26 to suppress expression of a subset of microRNAs. May cooperate with mei-P26 to regulate bam expression levels in germline cells during gametogenesis. Required to promote mitosis to meiosis transition during gametogenesis. May regulate germline cell division in part by regulating ribosome biogenesis. The sequence is that of tRNA (guanine-N(7)-)-methyltransferase non-catalytic subunit wuho from Drosophila melanogaster (Fruit fly).